The sequence spans 369 residues: Putative FAD-dependent oxidoreductase LodB (369 aa).

FAD contacts are provided by residues 10 to 14 and Arg-103; that span reads GGGPA.

FAD serves as cofactor.

It is found in the cytoplasm. In terms of biological role, is required for lysine-epsilon oxidase (LOD) activity in M.mediterranea. May be involved in the generation of the quinonic cofactor of LodA, leading to the active form of LodA containing a tyrosine-derived quinone cofactor. The polypeptide is Putative FAD-dependent oxidoreductase LodB (lodB) (Marinomonas mediterranea (strain ATCC 700492 / JCM 21426 / NBRC 103028 / MMB-1)).